Here is a 390-residue protein sequence, read N- to C-terminus: Flagellar P-ring protein (390 aa).

Positions 1–25 are cleaved as a signal peptide; it reads MLLKKIFLTGIIVLDLVFFVSYGFA.

It belongs to the FlgI family. In terms of assembly, the basal body constitutes a major portion of the flagellar organelle and consists of four rings (L,P,S, and M) mounted on a central rod.

The protein localises to the periplasm. Its subcellular location is the bacterial flagellum basal body. Functionally, assembles around the rod to form the L-ring and probably protects the motor/basal body from shearing forces during rotation. The protein is Flagellar P-ring protein of Syntrophus aciditrophicus (strain SB).